The sequence spans 360 residues: Peptide chain release factor 1 (360 aa).

Gln237 is modified (N5-methylglutamine).

It belongs to the prokaryotic/mitochondrial release factor family. In terms of processing, methylated by PrmC. Methylation increases the termination efficiency of RF1.

Its subcellular location is the cytoplasm. Peptide chain release factor 1 directs the termination of translation in response to the peptide chain termination codons UAG and UAA. In Pseudomonas putida (strain ATCC 700007 / DSM 6899 / JCM 31910 / BCRC 17059 / LMG 24140 / F1), this protein is Peptide chain release factor 1.